Consider the following 294-residue polypeptide: 2-hydroxy-3-oxopropionate reductase (294 aa).

Residues 4 to 18 (GFIGLGIMGKPMSKN) and Ser-95 each bind NAD(+). The active site involves Lys-170. NAD(+) is bound at residue Lys-238.

This sequence belongs to the HIBADH-related family. 2-hydroxy-3-oxopropionate reductase subfamily.

It catalyses the reaction (R)-glycerate + NADP(+) = 2-hydroxy-3-oxopropanoate + NADPH + H(+). The catalysed reaction is (R)-glycerate + NAD(+) = 2-hydroxy-3-oxopropanoate + NADH + H(+). The protein operates within carbohydrate acid metabolism; galactarate degradation; D-glycerate from galactarate: step 3/3. In terms of biological role, catalyzes the reduction of tatronate semialdehyde to D-glycerate. The sequence is that of 2-hydroxy-3-oxopropionate reductase from Escherichia coli O6:H1 (strain CFT073 / ATCC 700928 / UPEC).